Here is a 153-residue protein sequence, read N- to C-terminus: 6,7-dimethyl-8-ribityllumazine synthase (153 aa).

Residues F22, A56–E58, and A80–I82 contribute to the 5-amino-6-(D-ribitylamino)uracil site. Residue G85 to T86 participates in (2S)-2-hydroxy-3-oxobutyl phosphate binding. Catalysis depends on H88, which acts as the Proton donor. A 5-amino-6-(D-ribitylamino)uracil-binding site is contributed by F113. A (2S)-2-hydroxy-3-oxobutyl phosphate-binding site is contributed by R127.

This sequence belongs to the DMRL synthase family. As to quaternary structure, forms an icosahedral capsid composed of 60 subunits, arranged as a dodecamer of pentamers.

It catalyses the reaction (2S)-2-hydroxy-3-oxobutyl phosphate + 5-amino-6-(D-ribitylamino)uracil = 6,7-dimethyl-8-(1-D-ribityl)lumazine + phosphate + 2 H2O + H(+). The protein operates within cofactor biosynthesis; riboflavin biosynthesis; riboflavin from 2-hydroxy-3-oxobutyl phosphate and 5-amino-6-(D-ribitylamino)uracil: step 1/2. Its function is as follows. Catalyzes the formation of 6,7-dimethyl-8-ribityllumazine by condensation of 5-amino-6-(D-ribitylamino)uracil with 3,4-dihydroxy-2-butanone 4-phosphate. This is the penultimate step in the biosynthesis of riboflavin. This chain is 6,7-dimethyl-8-ribityllumazine synthase, found in Hydrogenovibrio crunogenus (strain DSM 25203 / XCL-2) (Thiomicrospira crunogena).